We begin with the raw amino-acid sequence, 872 residues long: MPQLLRDILCVIETFHKYAREDAATLTCTELKQLIQSEFEDIFQPCAIHAVERNLNLLNIDSNGAISFDEFVLAIFSFLNVCYLDTQSLLNSEPRQVSKPEGMPHDMGLQVTNETDQWTEGTSQTQDKVVLPSGTASSTHLSLEERAVEHNRVDPQGHTTAHKLPVETSEHSDSKNQHLKGDEQSQKVDQDVSATGDSRTQRETSKPMAGSEQISSHTKGEGQNKEILQKGDILARKQSGTETGGRFGEQEGSLGILHSPLEETTQRPGGSSEDQEVAGEKGVKGHPKSQEPSVQGKDEPSSEHVDLPKQAAARKPSQTQKSAAAKDESRTAETPEPPIQEKEYETRDLSVQGENRNVSETPMVRVERKGVRGPEVHQTVGQKQIEEKTQPPALEEPTEDKKYHELQESSKEKNAGEDSETHELNSEGGEQKDSESEGAISPGEEARHAEEGTAEALVNSKNAPEAEGTPGTRERIWELTTLENQSGEKNKMTTKIHDKLVKEDDGYQGEGSEPVATQNDERSPETPNSLTAEDGDSNSETSDLFVQGDSQSQTNPFRGSVQGSDSNNPETQKHLALSEEKRVQEAAVLAVRGEDEQVTEEHAQEHEGQGSATTGRGPAVEPRGHSDTQVFIVRDENTKSLEPGIPGAPNAGITKQLSVRQLPTKKDSRKELKDQSPSTKKEEDGALEAQEDLVKSLDENNAVSQKTCPATLEEETESPQQLAGEQSLSTKEHDPSVSESGLEERMQRDQELCLVERGAEHSSPLYEALQEKMLQQTNVTQGEHQNQAQTASVASPEIRRNQSSASLTNDSSDGLVFFIDRQALQKYIREFLPDEDPTGAQQISAPQALEDKQGRPQREELEPQKEASAPKQ.

The region spanning 46 to 81 (CAIHAVERNLNLLNIDSNGAISFDEFVLAIFSFLNV) is the EF-hand domain. A compositionally biased stretch (polar residues) spans 117–127 (QWTEGTSQTQD). 3 disordered regions span residues 117-759 (QWTE…ERGA), 774-813 (LQQTNVTQGEHQNQAQTASVASPEIRRNQSSASLTNDSSD), and 830-872 (EFLP…APKQ). Composition is skewed to basic and acidic residues over residues 142 to 155 (SLEERAVEHNRVDP), 164 to 190 (LPVETSEHSDSKNQHLKGDEQSQKVDQ), 218 to 235 (TKGEGQNKEILQKGDILA), 296 to 307 (GKDEPSSEHVDL), 324 to 348 (AAKDESRTAETPEPPIQEKEYETRD), 365 to 375 (RVERKGVRGPE), 399 to 435 (EDKKYHELQESSKEKNAGEDSETHELNSEGGEQKDSE), and 486 to 505 (SGEKNKMTTKIHDKLVKEDD). Polar residues predominate over residues 538 to 570 (NSETSDLFVQGDSQSQTNPFRGSVQGSDSNNPE). Basic and acidic residues-rich tracts occupy residues 571-584 (TQKHLALSEEKRVQ), 592-608 (RGEDEQVTEEHAQEHEG), and 664-684 (TKKDSRKELKDQSPSTKKEED). Composition is skewed to polar residues over residues 699 to 708 (ENNAVSQKTC) and 718 to 729 (SPQQLAGEQSLS). Residues 730–751 (TKEHDPSVSESGLEERMQRDQE) are compositionally biased toward basic and acidic residues. 2 stretches are compositionally biased toward polar residues: residues 774–793 (LQQTNVTQGEHQNQAQTASV) and 801–812 (NQSSASLTNDSS). The segment covering 849-865 (LEDKQGRPQREELEPQK) has biased composition (basic and acidic residues).

The protein belongs to the S-100 family.

This Bos taurus (Bovine) protein is Trichohyalin-like protein 1 (TCHHL1).